Here is a 348-residue protein sequence, read N- to C-terminus: Nuclear receptor subfamily 1 group I member 3 (348 aa).

A DNA-binding region (nuclear receptor) is located at residues 8 to 83; the sequence is PRSCMVCGDR…AGMKKEMILS (76 aa). The NR C4-type zinc finger occupies 11 to 31; that stretch reads CMVCGDRATGYHFHALTCEGC. Threonine 38 is modified (phosphothreonine; by PKC). Residues 47-71 form an NR C4-type zinc finger; that stretch reads CPFAGNCKVNKAQRRHCPACRLQKC. The region spanning 109–348 is the NR LBD domain; that stretch reads GQQELVQTLL…MMPLLQEICS (240 aa).

The protein belongs to the nuclear hormone receptor family. NR1 subfamily. In terms of assembly, heterodimer of NR1I3 and RXR. Interacts with PSMC4. Interacts with ECT2. Directly interacts with DNAJC7; this complex may also include HSP90. Interacts with CRY1. Interacts with CRY2 in a ligand-dependent manner. Post-translationally, phosphorylated at Thr-38 by PKC, dephosphorylation of Thr-38 is required for nuclear translocation and activation.

Its subcellular location is the nucleus. It is found in the cytoplasm. The protein localises to the cytoskeleton. Binds and transactivates the retinoic acid response elements that control expression of the retinoic acid receptor beta 2 and alcohol dehydrogenase 3 genes. Transactivates both the phenobarbital responsive element module of the human CYP2B6 gene and the CYP3A4 xenobiotic response element. The chain is Nuclear receptor subfamily 1 group I member 3 (NR1I3) from Callorhinus ursinus (Northern fur seal).